Consider the following 1637-residue polypeptide: Kinesin-like protein KIF21B (1637 aa).

The Kinesin motor domain maps to 8 to 370 (CVKVAVRIRP…LKYANRARNI (363 aa)). 87 to 94 (GQTGAGKT) is a binding site for ATP. Coiled coils occupy residues 376 to 604 (VNQD…EEEG) and 631 to 824 (NFQA…ALRR). Residues 400–1099 (MEYKAGKRVI…LQALIYNVQQ (700 aa)) are interaction with TRIM3. Low complexity predominate over residues 509–533 (ASARSPYSLGASPAAPAFGGSPASS). Disordered regions lie at residues 509-538 (ASAR…EDAS) and 552-628 (KKKE…PEEK). The segment covering 578 to 627 (NSEETDENEAEEEEEERDESGCEEEEGREDEDEDSGSEESLVDSDSDPEE) has biased composition (acidic residues). Serine 579 carries the phosphoserine modification. Residue threonine 582 is modified to Phosphothreonine. Disordered regions lie at residues 830 to 865 (SERV…GARS) and 880 to 906 (FLGD…GASQ). Residues 846 to 865 (SGAEVSASTTSSEAESGARS) show a composition bias toward low complexity. Positions 928–1016 (MQRMTIVNLE…EETKEELDST (89 aa)) form a coiled coil. A phosphoserine mark is found at serine 1149, serine 1167, and serine 1215. The segment covering 1194–1217 (RTVSLPTRGSTFPRQSRATETSPL) has biased composition (polar residues). The interval 1194 to 1251 (RTVSLPTRGSTFPRQSRATETSPLTRRKSYDRGQPIRSTDVGFTPPSSPPTRPRNDRN) is disordered. At threonine 1237 the chain carries Phosphothreonine. The residue at position 1241 (serine 1241) is a Phosphoserine. 7 WD repeats span residues 1306-1343 (GHTK…EIAA), 1346-1384 (GHPN…KCIR), 1410-1448 (QGEH…PVGK), 1451-1493 (GHIG…TGTI), 1502-1539 (PHYD…LIQQ), 1543-1582 (AHKD…PIGE), and 1585-1622 (GHDS…TPCL).

It belongs to the TRAFAC class myosin-kinesin ATPase superfamily. Kinesin family. In terms of assembly, interacts with TRIM3; the interaction positively affects motility of KIF21B. Interacts with GABARAP and GABA(A) receptor subunits: GABRG2, GABRA1 and GABRA2. May interact with GABA(A) receptor subunits: GABRB2 and GABRB3.

Its subcellular location is the cytoplasm. It is found in the cytoskeleton. The protein resides in the cell projection. The protein localises to the dendrite. It localises to the growth cone. Its subcellular location is the axon. It is found in the cytoplasmic vesicle. Plus-end directed microtubule-dependent motor protein which displays processive activity. Is involved in regulation of microtubule dynamics, synapse function and neuronal morphology, including dendritic tree branching and spine formation. Plays a role in lerning and memory. Involved in delivery of gamma-aminobutyric acid (GABA(A)) receptor to cell surface. In Homo sapiens (Human), this protein is Kinesin-like protein KIF21B (KIF21B).